An 804-amino-acid polypeptide reads, in one-letter code: Exocyst complex component 6 (804 aa).

It belongs to the SEC15 family. In terms of assembly, the exocyst complex is composed of EXOC1, EXOC2, EXOC3, EXOC4, EXOC5, EXOC6, EXOC7 and EXOC8. Interacts with CNTRL. Interacts with RAB11A in a GTP-dependent manner.

The protein localises to the cytoplasm. It is found in the perinuclear region. Its subcellular location is the cell projection. It localises to the growth cone. The protein resides in the midbody. The protein localises to the midbody ring. Functionally, component of the exocyst complex involved in the docking of exocytic vesicles with fusion sites on the plasma membrane. Together with RAB11A, RAB3IP, RAB8A, PARD3, PRKCI, ANXA2, CDC42 and DNMBP promotes transcytosis of PODXL to the apical membrane initiation sites (AMIS), apical surface formation and lumenogenesis. In Homo sapiens (Human), this protein is Exocyst complex component 6 (EXOC6).